Reading from the N-terminus, the 397-residue chain is MAKEKFERNKPHVNVGTIGHVDHGKTTLTAALTRVCSEVFGSARVDFDKIDSAPEEKARGITINTAHVEYDSNVRHYAHVDCPGHADYVKNMITGAAQMDGAILVCSAADGPMPQTREHILLSRQVGVPYIVVFLNKADMVDDAELLELVEMEVRDLLSTYDFPGDDTPIIIGSALMALNGEDDNGLGTTAVKKLVETLDSYIPEPVRAIDKPFLMPIEDVFSISGRGTVVTGRVERGIVKVQEEIEIVGLRPTTKTTCTGVEMFRKLLDEGRAGENCGVLLRGTKRDEVERGQVLAKPGTIKPHTKFEAEVYVLSKEEGGRHTPFFKGYRPQFYFRTTDVTGSCELPEGVEMVMPGDNVKMVVTLIKPIAMEDGLRFAIREGGRTVGAGVVAKIVE.

Positions 10–207 (KPHVNVGTIG…TLDSYIPEPV (198 aa)) constitute a tr-type G domain. A G1 region spans residues 19–26 (GHVDHGKT). 19-26 (GHVDHGKT) is a binding site for GTP. A Mg(2+)-binding site is contributed by Thr26. Positions 60-64 (GITIN) are G2. A G3 region spans residues 81-84 (DCPG). GTP-binding positions include 81 to 85 (DCPGH) and 136 to 139 (NKAD). Residues 136–139 (NKAD) are G4. The G5 stretch occupies residues 174 to 176 (SAL).

Belongs to the TRAFAC class translation factor GTPase superfamily. Classic translation factor GTPase family. EF-Tu/EF-1A subfamily. In terms of assembly, monomer.

It is found in the cytoplasm. It carries out the reaction GTP + H2O = GDP + phosphate + H(+). Its function is as follows. GTP hydrolase that promotes the GTP-dependent binding of aminoacyl-tRNA to the A-site of ribosomes during protein biosynthesis. This Stutzerimonas stutzeri (strain A1501) (Pseudomonas stutzeri) protein is Elongation factor Tu 1.